The primary structure comprises 306 residues: Isoaspartyl peptidase/L-asparaginase (306 aa).

Thr174 serves as the catalytic Nucleophile. Substrate-binding positions include 202-205 (RIGD) and 224-227 (TGKG).

The protein belongs to the Ntn-hydrolase family. As to quaternary structure, heterotetramer of two alpha and two beta chains arranged as a dimer of alpha/beta heterodimers. In terms of processing, cleaved into an alpha and beta chain by autocatalysis; this activates the enzyme. The N-terminal residue of the beta subunit is responsible for the nucleophile hydrolase activity. In terms of tissue distribution, developing seeds.

The enzyme catalyses Cleavage of a beta-linked Asp residue from the N-terminus of a polypeptide.. In terms of biological role, degrades proteins damaged by L-isoaspartyl residue formation (also known as beta-Asp residues). Also has L-asparaginase activity, which is used to liberate stored nitrogen during seed development. The sequence is that of Isoaspartyl peptidase/L-asparaginase from Lupinus arboreus (Tree lupine).